The chain runs to 653 residues: Cell wall adhesin EAP1 (653 aa).

A signal peptide spans M1–G18. Positions F19 to S146 are N-terminal cell-cell adhesion domain. The interval L144–E267 is disordered. A compositionally biased stretch (low complexity) spans T145–E267. A run of 15 repeats spans residues T147–S152, T153–S158, T159–S164, T165–S170, T171–S176, T177–S182, T192–S197, T198–S203, T204–S209, T210–S215, T216–S221, T222–S227, T228–S233, T234–T248, and T249–S254. A 15 X 6 AA tandem repeats, Ser/Thr-rich region spans residues T147–S254. The N-linked (GlcNAc...) asparagine glycan is linked to N323. Disordered stretches follow at residues T324–P540 and E572–V595. 10 repeat units span residues T326 to T345, T346 to T365, T366 to T389, T390 to T413, T414 to T433, T434 to T457, T458 to T477, T478 to T501, T502 to T521, and T522 to V541. Positions T326–V541 are 10 X 20 AA approximate tandem repeats. 2 stretches are compositionally biased toward low complexity: residues P341 to P353 and P361 to T538. Over residues G579–T590 the composition is skewed to polar residues. Residue G632 is the site of GPI-anchor amidated glycine attachment. A propeptide spans S633–M653 (removed in mature form).

It belongs to the PGA18 family. The GPI-anchor is attached to the protein in the endoplasmic reticulum and serves to target the protein to the cell surface. There, the glucosamine-inositol phospholipid moiety is cleaved off and the GPI-modified mannoprotein is covalently attached via its lipidless GPI glycan remnant to the 1,6-beta-glucan of the outer cell wall layer.

The protein resides in the secreted. The protein localises to the cell wall. It is found in the membrane. Functionally, cell wall protein which mediates cell-cell and cell-substrate adhesion. Required for biofilm formation and plays a role in virulence. The chain is Cell wall adhesin EAP1 (EAP1) from Candida albicans (strain SC5314 / ATCC MYA-2876) (Yeast).